Reading from the N-terminus, the 462-residue chain is GTPase Der (462 aa).

EngA-type G domains follow at residues 3–170 (ITIA…TSQK) and 201–372 (IKIA…FNSI). Residues 9–16 (GRTNVGKS), 57–61 (DTPGI), 122–125 (NKIE), 207–214 (GKPNVGKS), 254–258 (DTAGI), and 319–322 (NKND) contribute to the GTP site. Residues 373–457 (KKIHTSKITE…SIVLYFKSSK (85 aa)) enclose the KH-like domain.

The protein belongs to the TRAFAC class TrmE-Era-EngA-EngB-Septin-like GTPase superfamily. EngA (Der) GTPase family. In terms of assembly, associates with the 50S ribosomal subunit.

In terms of biological role, GTPase that plays an essential role in the late steps of ribosome biogenesis. The protein is GTPase Der of Buchnera aphidicola subsp. Baizongia pistaciae (strain Bp).